The chain runs to 207 residues: Large ribosomal subunit protein uL4 (207 aa).

Residues 48 to 70 (KAQKTRSEVSGGGAKPWRQKGTG) are disordered.

It belongs to the universal ribosomal protein uL4 family. As to quaternary structure, part of the 50S ribosomal subunit.

In terms of biological role, one of the primary rRNA binding proteins, this protein initially binds near the 5'-end of the 23S rRNA. It is important during the early stages of 50S assembly. It makes multiple contacts with different domains of the 23S rRNA in the assembled 50S subunit and ribosome. Forms part of the polypeptide exit tunnel. This chain is Large ribosomal subunit protein uL4, found in Francisella tularensis subsp. mediasiatica (strain FSC147).